We begin with the raw amino-acid sequence, 151 residues long: D-aminoacyl-tRNA deacylase (151 aa).

A Gly-cisPro motif, important for rejection of L-amino acids motif is present at residues 136–137 (GP).

The protein belongs to the DTD family. Homodimer.

The protein resides in the cytoplasm. It catalyses the reaction glycyl-tRNA(Ala) + H2O = tRNA(Ala) + glycine + H(+). The catalysed reaction is a D-aminoacyl-tRNA + H2O = a tRNA + a D-alpha-amino acid + H(+). Functionally, an aminoacyl-tRNA editing enzyme that deacylates mischarged D-aminoacyl-tRNAs. Also deacylates mischarged glycyl-tRNA(Ala), protecting cells against glycine mischarging by AlaRS. Acts via tRNA-based rather than protein-based catalysis; rejects L-amino acids rather than detecting D-amino acids in the active site. By recycling D-aminoacyl-tRNA to D-amino acids and free tRNA molecules, this enzyme counteracts the toxicity associated with the formation of D-aminoacyl-tRNA entities in vivo and helps enforce protein L-homochirality. The polypeptide is D-aminoacyl-tRNA deacylase (Lactococcus lactis subsp. cremoris (strain SK11)).